Reading from the N-terminus, the 546-residue chain is Chaperonin GroEL (546 aa).

ATP is bound by residues 30–33 (TLGP), Lys51, 87–91 (DGTTT), Gly415, and Asp495.

It belongs to the chaperonin (HSP60) family. Forms a cylinder of 14 subunits composed of two heptameric rings stacked back-to-back. Interacts with the co-chaperonin GroES.

Its subcellular location is the cytoplasm. The catalysed reaction is ATP + H2O + a folded polypeptide = ADP + phosphate + an unfolded polypeptide.. In terms of biological role, together with its co-chaperonin GroES, plays an essential role in assisting protein folding. The GroEL-GroES system forms a nano-cage that allows encapsulation of the non-native substrate proteins and provides a physical environment optimized to promote and accelerate protein folding. The sequence is that of Chaperonin GroEL from Brucella ovis (strain ATCC 25840 / 63/290 / NCTC 10512).